A 95-amino-acid chain; its full sequence is Ribonuclease kappa (95 aa).

2 helical membrane passes run G12–I32 and C68–M88.

Belongs to the RNase K family.

It localises to the membrane. In terms of biological role, endoribonuclease. Functionally, (Microbial infection) Required for the initial stages of clathrin-mediated endocytic uptake of a diverse set of flaviviruses, including dengue and West Nile. Not required for clathrin-mediated endocytosis and macropinocytosis. The protein is Ribonuclease kappa of Drosophila melanogaster (Fruit fly).